The primary structure comprises 172 residues: Disulfide bond formation protein B (172 aa).

Residues 1–13 (MIIRLAGMSVRQG) are Cytoplasmic-facing. The helical transmembrane segment at 14-30 (CLLGLLMCALMMGVALV) threads the bilayer. Residues 31-48 (LQYVYGLTPCPLCIGQRI) are Periplasmic-facing. Cysteines 40 and 43 form a disulfide. The helical transmembrane segment at 49-65 (AVLLAAFVFAIGALHNP) threads the bilayer. Topologically, residues 66–72 (AGNLGRG) are cytoplasmic. The chain crosses the membrane as a helical span at residues 73-90 (LYAGLAALASVLGLAVAA). Topologically, residues 91–147 (RHVWLQSLPPENVPSCGPGLDYMMEVLPLWDVLSRVLAGSGECAEIHGSLLGMSIPQ) are periplasmic. A disulfide bridge links Cys-106 with Cys-133. The chain crosses the membrane as a helical span at residues 148–166 (WTLLGFAVLLLIPLGMLAG). Residues 167–172 (IVIRRR) lie on the Cytoplasmic side of the membrane.

The protein belongs to the DsbB family.

The protein resides in the cell inner membrane. Functionally, required for disulfide bond formation in some periplasmic proteins. Acts by oxidizing the DsbA protein. In Chromohalobacter salexigens (strain ATCC BAA-138 / DSM 3043 / CIP 106854 / NCIMB 13768 / 1H11), this protein is Disulfide bond formation protein B.